Reading from the N-terminus, the 505-residue chain is Histidine--tRNA ligase, mitochondrial (505 aa).

The transit peptide at 1–31 directs the protein to the mitochondrion; it reads MPHLGPLRRRAWAALLGQLLRPPSTVCTRGC. Ser-66 carries the phosphoserine modification. L-histidine is bound by residues 130–132, Arg-157, Gln-173, Asp-177, Arg-326, and 330–331; these read DLT and YY. Lys-443 carries the post-translational modification N6-acetyllysine.

Belongs to the class-II aminoacyl-tRNA synthetase family. As to quaternary structure, homodimer.

The protein resides in the mitochondrion. It carries out the reaction tRNA(His) + L-histidine + ATP = L-histidyl-tRNA(His) + AMP + diphosphate + H(+). In terms of biological role, mitochondrial aminoacyl-tRNA synthetase that catalyzes the ATP-dependent ligation of histidine to the 3'-end of its cognate tRNA, via the formation of an aminoacyl-adenylate intermediate (His-AMP). The sequence is that of Histidine--tRNA ligase, mitochondrial (Hars2) from Mus musculus (Mouse).